The primary structure comprises 324 residues: Serine/threonine-protein phosphatase PP1 isozyme 8 (324 aa).

Mn(2+) contacts are provided by Asp-66, His-68, Asp-94, and Asn-126. Residue His-127 is the Proton donor of the active site. 2 residues coordinate Mn(2+): His-175 and His-250.

Belongs to the PPP phosphatase family. PP-1 subfamily. Mn(2+) serves as cofactor. Expressed in roots, rosettes and flowers.

It is found in the nucleus. Its subcellular location is the cytoplasm. The catalysed reaction is O-phospho-L-seryl-[protein] + H2O = L-seryl-[protein] + phosphate. It catalyses the reaction O-phospho-L-threonyl-[protein] + H2O = L-threonyl-[protein] + phosphate. With respect to regulation, phosphatase activity is strongly reduced by the protein phosphatase inhibitor 2 (I-2). Functionally, serine/threonine-protein phosphatase that possesses phosphatase activity toward para-nitrophenyl phosphate (pNPP) in vitro. This Arabidopsis thaliana (Mouse-ear cress) protein is Serine/threonine-protein phosphatase PP1 isozyme 8.